The sequence spans 84 residues: Cytochrome b559 subunit alpha (84 aa).

A helical transmembrane segment spans residues 22 to 36; it reads IIHSITIPSLFVSGW. H24 contributes to the heme binding site.

Belongs to the PsbE/PsbF family. As to quaternary structure, heterodimer of an alpha subunit and a beta subunit. PSII is composed of 1 copy each of membrane proteins PsbA, PsbB, PsbC, PsbD, PsbE, PsbF, PsbH, PsbI, PsbJ, PsbK, PsbL, PsbM, PsbT, PsbX, PsbY, PsbZ, Psb30/Ycf12, at least 3 peripheral proteins of the oxygen-evolving complex and a large number of cofactors. It forms dimeric complexes. Heme b is required as a cofactor.

The protein resides in the plastid. The protein localises to the chloroplast thylakoid membrane. This b-type cytochrome is tightly associated with the reaction center of photosystem II (PSII). PSII is a light-driven water:plastoquinone oxidoreductase that uses light energy to abstract electrons from H(2)O, generating O(2) and a proton gradient subsequently used for ATP formation. It consists of a core antenna complex that captures photons, and an electron transfer chain that converts photonic excitation into a charge separation. This chain is Cytochrome b559 subunit alpha, found in Phaeodactylum tricornutum (strain CCAP 1055/1).